A 381-amino-acid chain; its full sequence is Prostatic acid phosphatase (381 aa).

The first 31 residues, 1–31 (MRAVPLPLSRTASLSLGFLLLLSLCLDPGQA), serve as a signal peptide directing secretion. Residue Arg-42 participates in substrate binding. The active-site Nucleophile is His-43. Arg-46 lines the substrate pocket. N-linked (GlcNAc...) asparagine glycosylation occurs at Asn-93. Arg-110 lines the substrate pocket. Cystine bridges form between Cys-160/Cys-371, Cys-214/Cys-312, and Cys-346/Cys-350. A glycan (N-linked (GlcNAc...) asparagine) is linked at Asn-219. Substrate is bound at residue His-288. The active-site Proton donor is the Asp-289. Residue Asn-332 is glycosylated (N-linked (GlcNAc...) asparagine).

This sequence belongs to the histidine acid phosphatase family. As to quaternary structure, homodimer; dimer formation is required for phosphatase activity. Expressed in salivary gland, thymus and thyroid gland. In terms of tissue distribution, widely expressed in prostate lobes, brain, kidney, liver, lung, muscle, placenta, salivary gland, spleen, thyroid and thymus. Locates to Schwann cells and fibroblasts. Expressed in peptidergic and non-peptidergic nociceptive (pain-sensing) neurons. Preferentially expressed in non-peptidergic doral root ganglia neurons.

The protein resides in the secreted. The protein localises to the cell membrane. It localises to the lysosome membrane. It carries out the reaction a phosphate monoester + H2O = an alcohol + phosphate. The catalysed reaction is a ribonucleoside 5'-phosphate + H2O = a ribonucleoside + phosphate. The enzyme catalyses 1-(9Z-octadecenoyl)-sn-glycero-3-phosphate + H2O = 1-(9Z-octadecenoyl)-sn-glycerol + phosphate. It catalyses the reaction O-phospho-L-tyrosyl-[protein] + H2O = L-tyrosyl-[protein] + phosphate. A non-specific tyrosine phosphatase that dephosphorylates a diverse number of substrates under acidic conditions (pH 4-6) including alkyl, aryl, and acyl orthophosphate monoesters and phosphorylated proteins. Has lipid phosphatase activity and inactivates lysophosphatidic acid in seminal plasma. In terms of biological role, in addition to its tyrosine phosphatase activity, also has ecto-5'-nucleotidase activity in dorsal root ganglion (DRG) neurons. Generates adenosine from AMP. This extracellular adenosine leads to a decrease in chronic pain by activating A1R in nociceptive neurons. The sequence is that of Prostatic acid phosphatase (Acp3) from Mus musculus (Mouse).